Reading from the N-terminus, the 323-residue chain is uncharacterized protein (323 aa).

The N-terminal stretch at 1 to 45 (MLATLSQIRAWSTEHLIDAAGYWTETADRWEDVFLQMRNQAHAIA) is a signal peptide. A disordered region spans residues 186–227 (FKQDGPTPPPPGAPHPSGGADGPYSDPITSMMLPPAGTEAPV). The next 2 helical transmembrane spans lie at 269 to 289 (SAEW…VVGT) and 290 to 310 (ALAI…LLGV).

The protein resides in the cell membrane. This is an uncharacterized protein from Mycobacterium tuberculosis (strain CDC 1551 / Oshkosh).